The primary structure comprises 433 residues: Urokinase-type plasminogen activator (433 aa).

Positions 1–20 (MRVLLACLLVCALVVSDSDG) are cleaved as a signal peptide. The EGF-like domain occupies 29-65 (GESNCGCLNGGKCVTYKYFSNIQRCSCPKKFQGEHCE). Cystine bridges form between Cys-33-Cys-41, Cys-35-Cys-53, Cys-55-Cys-64, Cys-72-Cys-153, Cys-93-Cys-135, and Cys-124-Cys-148. A binds urokinase plasminogen activator surface receptor region spans residues 36-59 (LNGGKCVTYKYFSNIQRCSCPKKF). Residues 72–153 (CYQGNGHSYR…FVQFCMVQDC (82 aa)) enclose the Kringle domain. Residues 154–180 (SVGKSPSSPREKEEFQCGQKALRPRFK) form a connecting peptide region. At Ser-160 the chain carries Phosphoserine. Disulfide bonds link Cys-170/Cys-301, Cys-211/Cys-227, Cys-219/Cys-290, Cys-315/Cys-384, Cys-347/Cys-363, and Cys-374/Cys-402. In terms of domain architecture, Peptidase S1 spans 181-426 (IVGGQVTNAE…FLPWINTHTR (246 aa)). Active-site charge relay system residues include His-226 and Asp-277. Ser-378 serves as the catalytic Charge relay system.

This sequence belongs to the peptidase S1 family. As to quaternary structure, found in high and low molecular mass forms. Each consists of two chains, A and B. The high molecular mass form contains a long chain A which is cleaved to yield a short chain A. Forms heterodimer with SERPINA5. Binds LRP1B; binding is followed by internalization and degradation. Interacts with MRC2. Interacts with PLAUR. In complex with SERPINE1, interacts with PLAUR/uPAR. Interacts with SORL1 and LRP1, either alone or in complex with SERPINE1; these interactions are abolished in the presence of LRPAP1/RAP. The ternary complex composed of PLAUR-PLAU-PAI1 also interacts with SORLA. Post-translationally, produced as an inactive single-chain protein (pro-uPA or sc-uPA), is processed into the active disulfide-linked two-chain form of PLAU/uPA by a proteolytic event mediated, at least, by TMPRSS4.

It localises to the secreted. The catalysed reaction is Specific cleavage of Arg-|-Val bond in plasminogen to form plasmin.. With respect to regulation, inhibited by SERPINA5. Inhibited by SERPINE1. Specifically cleaves the zymogen plasminogen to form the active enzyme plasmin. This Bos taurus (Bovine) protein is Urokinase-type plasminogen activator (PLAU).